Here is a 181-residue protein sequence, read N- to C-terminus: Interleukin-24 (181 aa).

The first 26 residues, 1–26 (MSWGLQILPCLSLILLLWNQVPGLEG), serve as a signal peptide directing secretion. Cys34 and Cys81 are joined by a disulfide. A glycan (N-linked (GlcNAc...) asparagine) is linked at Asn74. Lys97 participates in a covalent cross-link: Glycyl lysine isopeptide (Lys-Gly) (interchain with G-Cter in ubiquitin).

Belongs to the IL-10 family. Post-translationally, glycosylated. In terms of processing, ubiquitination at Lys-97 promotes proteasomal degradation. As to expression, selectively expressed by Th2 cells. Expressed in the liver.

The protein localises to the secreted. Functionally, multifunctional cytokine mainly produced by T-cells that plays a regulatory role in immune response, tissue homeostasis, host defense, and oncogenesis. Possesses antiviral functions and induces the type I interferon response during influenza infection. Signals through two receptor complexes IL20RA/IL20RB or IL20RB/IL22RA1. In turn, stimulates the JAK1-STAT3 and MAPK pathways and promotes the secretion of pro-inflammatory mediators including IL8 and MMP1. Intracellularly, maintains endoplasmic reticulum homeostasis by restricting the eIF2alpha-CHOP pathway-mediated stress signal. In addition, acts as a quality control mechanism for the ubiquitin proteasome system by alerting the cell to proteasome dysfunction through activation of PKR/EIF2AK2. This Mus musculus (Mouse) protein is Interleukin-24 (Il24).